Here is a 620-residue protein sequence, read N- to C-terminus: Zinc metalloproteinase-disintegrin-like ACLD (620 aa).

The signal sequence occupies residues 1-20; the sequence is MIQVLLVTLCLAVFPYQGSS. Positions 21 to 189 are excised as a propeptide; it reads IILESGNVND…KKASQLNLTP (169 aa). In terms of domain architecture, Peptidase M12B spans 199–395; the sequence is KYVEFVVVLD…RRPKCILNEP (197 aa). E202 contacts Ca(2+). 2 N-linked (GlcNAc...) asparagine glycosylation sites follow: N259 and N265. Residue D286 coordinates Ca(2+). 3 cysteine pairs are disulfide-bonded: C310–C390, C350–C374, and C352–C357. H335 is a binding site for Zn(2+). The active site involves E336. Zn(2+) is bound by residues H339 and H345. An N-linked (GlcNAc...) asparagine glycan is attached at N373. The Ca(2+) site is built by C390 and N393. N-linked (GlcNAc...) asparagine glycosylation is present at N396. In terms of domain architecture, Disintegrin spans 403-489; that stretch reads PPVCGNELLE…ECPTDRFQRN (87 aa). Ca(2+)-binding residues include V405, N408, L410, E412, E415, and D418. Disulfide bonds link C406/C435, C417/C430, C419/C425, C429/C452, C443/C449, C448/C474, C461/C481, C468/C500, C493/C505, C512/C562, C527/C573, C540/C550, C557/C599, and C593/C604. The short motif at 467 to 469 is the D/ECD-tripeptide element; sequence DCD. Residues N502 and N536 are each glycosylated (N-linked (GlcNAc...) asparagine).

This sequence belongs to the venom metalloproteinase (M12B) family. P-III subfamily. P-IIIa sub-subfamily. As to quaternary structure, monomer. Zn(2+) is required as a cofactor. As to expression, expressed by the venom gland.

The protein resides in the secreted. Its activity is regulated as follows. Inhibited by EDTA and O-phenanthroline. Not inhibited by PMSF, benzamidine, irreversible serine-proteinase inhibitors and cysteine proteinase inhibitor E-64. Is a potent activator of prothrombin (F2). Does not elicit any hemorrhagic response. Barely inhibits collagen-induced platelet aggregation. Binds neither collagen, nor the jararhagin-monoclonal antibody MAJar3. Hydrolyzes the Aalpha-chain of fibrin and fibrinogen, without affecting the Bbeta- and gamma-chains. Is capable of triggering endothelial pro-inflammatory and procoagulant cell responses, but fails to trigger apoptosis. Induces von Willebrand factor release, and the expression of both ICAM1 and E-selectin (SELE) (without increase in VCAM1) in endothelial cells (HUVEC). Is also able to up-regulate the synthesis of the coagulation factor TF (F3). Enhances nitric oxide (NO) generation, prostacyclin production and interleukin-8 release. This chain is Zinc metalloproteinase-disintegrin-like ACLD, found in Agkistrodon contortrix laticinctus (Broad-banded copperhead).